The sequence spans 280 residues: 2-dehydro-3-deoxyphosphooctonate aldolase (280 aa).

The protein belongs to the KdsA family.

Its subcellular location is the cytoplasm. The catalysed reaction is D-arabinose 5-phosphate + phosphoenolpyruvate + H2O = 3-deoxy-alpha-D-manno-2-octulosonate-8-phosphate + phosphate. It participates in carbohydrate biosynthesis; 3-deoxy-D-manno-octulosonate biosynthesis; 3-deoxy-D-manno-octulosonate from D-ribulose 5-phosphate: step 2/3. Its pathway is bacterial outer membrane biogenesis; lipopolysaccharide biosynthesis. The sequence is that of 2-dehydro-3-deoxyphosphooctonate aldolase from Nitrosococcus oceani (strain ATCC 19707 / BCRC 17464 / JCM 30415 / NCIMB 11848 / C-107).